A 115-amino-acid polypeptide reads, in one-letter code: Protein SPIRAL1-like 2 (115 aa).

Positions 29–48 (AKAKPAAAAEKETTPAPVKK) are disordered.

It belongs to the SPIRAL1 family.

In terms of biological role, acts in maintaining the cortical microtubules organization essential for anisotropic cell growth. This Oryza sativa subsp. japonica (Rice) protein is Protein SPIRAL1-like 2.